The following is an 87-amino-acid chain: Large ribosomal subunit protein bL28 (87 aa).

It belongs to the bacterial ribosomal protein bL28 family.

The sequence is that of Large ribosomal subunit protein bL28 from Akkermansia muciniphila (strain ATCC BAA-835 / DSM 22959 / JCM 33894 / BCRC 81048 / CCUG 64013 / CIP 107961 / Muc).